Consider the following 286-residue polypeptide: Nucleoid occlusion protein (286 aa).

The segment at residues E147–L166 is a DNA-binding region (H-T-H motif).

Belongs to the ParB family.

Its subcellular location is the cytoplasm. It localises to the nucleoid. In terms of biological role, effects nucleoid occlusion by binding relatively nonspecifically to DNA and preventing the assembly of the division machinery in the vicinity of the nucleoid, especially under conditions that disturb the cell cycle. It helps to coordinate cell division and chromosome segregation by preventing the formation of the Z ring through the nucleoid, which would cause chromosome breakage. The sequence is that of Nucleoid occlusion protein from Oceanobacillus iheyensis (strain DSM 14371 / CIP 107618 / JCM 11309 / KCTC 3954 / HTE831).